Reading from the N-terminus, the 153-residue chain is uncharacterized protein (153 aa).

An N-terminal signal peptide occupies residues 1–22 (MKAFNKLFSLVVASVLVFSLAG). C23 carries N-palmitoyl cysteine lipidation. C23 is lipidated: S-diacylglycerol cysteine.

It to L.monocytogenes lmo0207.

Its subcellular location is the cell membrane. This is an uncharacterized protein from Escherichia coli (strain K12).